The following is a 496-amino-acid chain: Glycerol kinase (496 aa).

ADP is bound at residue T12. The ATP site is built by T12, T13, and S14. Residue T12 coordinates sn-glycerol 3-phosphate. R16 provides a ligand contact to ADP. Positions 82, 83, and 134 each coordinate sn-glycerol 3-phosphate. The glycerol site is built by R82, E83, and Y134. A Phosphohistidine; by HPr modification is found at H230. D244 contacts sn-glycerol 3-phosphate. Glycerol contacts are provided by D244 and Q245. Residues T266 and G309 each contribute to the ADP site. T266, G309, Q313, and G410 together coordinate ATP. The ADP site is built by G410 and N414.

The protein belongs to the FGGY kinase family. As to quaternary structure, homotetramer and homodimer (in equilibrium). Post-translationally, the phosphoenolpyruvate-dependent sugar phosphotransferase system (PTS), including enzyme I, and histidine-containing protein (HPr) are required for the phosphorylation, which leads to the activation of the enzyme.

It carries out the reaction glycerol + ATP = sn-glycerol 3-phosphate + ADP + H(+). It functions in the pathway polyol metabolism; glycerol degradation via glycerol kinase pathway; sn-glycerol 3-phosphate from glycerol: step 1/1. Activated by phosphorylation and inhibited by fructose 1,6-bisphosphate (FBP). Its function is as follows. Key enzyme in the regulation of glycerol uptake and metabolism. Catalyzes the phosphorylation of glycerol to yield sn-glycerol 3-phosphate. The protein is Glycerol kinase of Bacillus cereus (strain G9842).